Here is a 234-residue protein sequence, read N- to C-terminus: 7-cyano-7-deazaguanine synthase (234 aa).

Residue 8–18 (FSGGQDSTTCA) participates in ATP binding. Positions 194, 202, 205, and 208 each coordinate Zn(2+).

The protein belongs to the QueC family. It depends on Zn(2+) as a cofactor.

The catalysed reaction is 7-carboxy-7-deazaguanine + NH4(+) + ATP = 7-cyano-7-deazaguanine + ADP + phosphate + H2O + H(+). It participates in purine metabolism; 7-cyano-7-deazaguanine biosynthesis. Catalyzes the ATP-dependent conversion of 7-carboxy-7-deazaguanine (CDG) to 7-cyano-7-deazaguanine (preQ(0)). The protein is 7-cyano-7-deazaguanine synthase of Gloeobacter violaceus (strain ATCC 29082 / PCC 7421).